The chain runs to 90 residues: Small ribosomal subunit protein bS16 (90 aa).

The protein belongs to the bacterial ribosomal protein bS16 family.

The protein is Small ribosomal subunit protein bS16 of Geobacillus kaustophilus (strain HTA426).